The primary structure comprises 615 residues: 1-deoxy-D-xylulose-5-phosphate synthase (615 aa).

Thiamine diphosphate-binding positions include His-76 and 117-119 (GHS). Asp-148 serves as a coordination point for Mg(2+). Residues 149–150 (GA), Asn-177, Tyr-284, and Glu-365 contribute to the thiamine diphosphate site. A Mg(2+)-binding site is contributed by Asn-177.

Belongs to the transketolase family. DXPS subfamily. In terms of assembly, homodimer. Mg(2+) serves as cofactor. Thiamine diphosphate is required as a cofactor.

The enzyme catalyses D-glyceraldehyde 3-phosphate + pyruvate + H(+) = 1-deoxy-D-xylulose 5-phosphate + CO2. Its pathway is metabolic intermediate biosynthesis; 1-deoxy-D-xylulose 5-phosphate biosynthesis; 1-deoxy-D-xylulose 5-phosphate from D-glyceraldehyde 3-phosphate and pyruvate: step 1/1. Catalyzes the acyloin condensation reaction between C atoms 2 and 3 of pyruvate and glyceraldehyde 3-phosphate to yield 1-deoxy-D-xylulose-5-phosphate (DXP). This chain is 1-deoxy-D-xylulose-5-phosphate synthase, found in Francisella tularensis subsp. tularensis (strain FSC 198).